Here is a 204-residue protein sequence, read N- to C-terminus: MITTSLRRRTAAAVLSLSAVLATTAATAPGAAPAPSAAPAKAAPACPQFDDRTKAAADRGVDVDRITPEPVWRTTCGTLYRSDSRGPQVVFEEGFHAKDVQNGQYDVEKYVLVNQPSPYVSTSYDHDLYKTWYKSGYNYYVDAPGGIDVNKTIGDTHKWADQVEVAFPGGIQRKYIIGVCPVDRQTKTEIMSDCESNPHYQPWH.

A signal peptide spans 1–42; that stretch reads MITTSLRRRTAAAVLSLSAVLATTAATAPGAAPAPSAAPAKA. The cysteines at positions 46 and 76 are disulfide-linked. NADH is bound by residues 81-85 and Lys-98; that span reads RSDSR. Residues 111–114, 132–134, Trp-159, and Gln-162 contribute to the GDP site; these read VLVN and WYK. A PN (phosphate-nicotinamide) loop motif is present at residues 132-136; sequence WYKSG. Cys-180 and Cys-194 are disulfide-bonded.

Belongs to the pierisin ADP-ribosyltransferase family. As to quaternary structure, monomer.

Its subcellular location is the secreted. It carries out the reaction guanosine + NAD(+) = N(2)-(ADP-D-ribosyl)-guanosine + nicotinamide + H(+). It catalyses the reaction a 2'-deoxyguanosine in DNA + NAD(+) = an N(2)-(ADP-L-ribosyl)-2'-deoxyguanosine in DNA + nicotinamide + H(+). The enzyme catalyses 2'-deoxyguanosine + NAD(+) = N(2)-(ADP-D-ribosyl)-2'-deoxyguanosine + nicotinamide + H(+). The catalysed reaction is GMP + NAD(+) = N(2)-(ADP-D-ribosyl)-GMP + nicotinamide + H(+). It carries out the reaction GTP + NAD(+) = N(2)-(ADP-D-ribosyl)-GTP + nicotinamide + H(+). It catalyses the reaction dGMP + NAD(+) = N(2)-(ADP-D-ribosyl)-dGMP + nicotinamide + H(+). The enzyme catalyses dGTP + NAD(+) = N(2)-(ADP-D-ribosyl)-dGTP + nicotinamide + H(+). The catalysed reaction is 3',5'-cyclic GMP + NAD(+) = N(2)-(ADP-D-ribosyl)-3',5'-cyclic GMP + nicotinamide + H(+). It carries out the reaction guanine + NAD(+) = N(2)-(ADP-D-ribosyl)-guanine + nicotinamide + H(+). It catalyses the reaction GDP + NAD(+) = N(2)-(ADP-D-ribosyl)-GDP + nicotinamide + H(+). Inhibited by NADH. Its function is as follows. ADP-ribosylates the N2 amino group of guanosine, deoxyguanosine, GMP, dGMP, cGMP, GTP and dGTP; oligo-guanosine, oligo-deoxyguanosine and tRNA are ADP-ribosylated less efficiently, while dsDNA is a very poor substrate. Also acts on GDP. This is Guanine-specific ADP-ribosyl transferase from Streptomyces coelicolor (strain ATCC BAA-471 / A3(2) / M145).